The sequence spans 103 residues: Large ribosomal subunit protein bL21 (103 aa).

This sequence belongs to the bacterial ribosomal protein bL21 family. Part of the 50S ribosomal subunit. Contacts protein L20.

Its function is as follows. This protein binds to 23S rRNA in the presence of protein L20. The sequence is that of Large ribosomal subunit protein bL21 from Haemophilus influenzae (strain ATCC 51907 / DSM 11121 / KW20 / Rd).